Reading from the N-terminus, the 171-residue chain is Zinc finger A20 and AN1 domain-containing stress-associated protein 8 (171 aa).

The segment at 11-45 adopts an A20-type zinc-finger fold; it reads PEGPILCINNCGFFGSAATMNMCSKCHKEMIMKQE. Cysteine 17, cysteine 21, cysteine 33, cysteine 36, cysteine 112, cysteine 115, cysteine 126, cysteine 128, cysteine 133, histidine 136, histidine 142, and cysteine 144 together coordinate Zn(2+). Residues 106-152 form an AN1-type zinc finger; that stretch reads REGPNRCSTCRKRVGLTGFNCRCGNLYCAMHRYSDKHDCQFDYRTAA.

In terms of biological role, may be involved in environmental stress response. The sequence is that of Zinc finger A20 and AN1 domain-containing stress-associated protein 8 (SAP8) from Oryza sativa subsp. indica (Rice).